The sequence spans 385 residues: Single-stranded DNA-binding protein 4 (385 aa).

At Met1 the chain carries N-acetylmethionine. One can recognise a LisH domain in the interval 17 to 49; that stretch reads AREKLALYVYEYLLHIGAQKSAQTFLSEIRWEK. Disordered regions lie at residues 122–287 and 331–363; these read FQGP…NSSE and GSGD…GEMA. Positions 245-263 are enriched in low complexity; that stretch reads SPSGNSIPYSSSSPGSYTG. The span at 267–277 shows a compositional bias: pro residues; sequence GGGPPGTPIMP. Ser341 carries the post-translational modification Phosphoserine. Thr355 carries the post-translational modification Phosphothreonine.

It is found in the nucleus. The sequence is that of Single-stranded DNA-binding protein 4 (SSBP4) from Homo sapiens (Human).